The primary structure comprises 268 residues: Tryptophan synthase alpha chain (268 aa).

Catalysis depends on proton acceptor residues Glu47 and Asp58.

It belongs to the TrpA family. In terms of assembly, tetramer of two alpha and two beta chains.

It carries out the reaction (1S,2R)-1-C-(indol-3-yl)glycerol 3-phosphate + L-serine = D-glyceraldehyde 3-phosphate + L-tryptophan + H2O. It functions in the pathway amino-acid biosynthesis; L-tryptophan biosynthesis; L-tryptophan from chorismate: step 5/5. The alpha subunit is responsible for the aldol cleavage of indoleglycerol phosphate to indole and glyceraldehyde 3-phosphate. This chain is Tryptophan synthase alpha chain, found in Chlorobium phaeobacteroides (strain BS1).